Here is a 97-residue protein sequence, read N- to C-terminus: Large ribosomal subunit protein uL23 (97 aa).

This sequence belongs to the universal ribosomal protein uL23 family. In terms of assembly, part of the 50S ribosomal subunit. Contacts protein L29, and trigger factor when it is bound to the ribosome.

Functionally, one of the early assembly proteins it binds 23S rRNA. One of the proteins that surrounds the polypeptide exit tunnel on the outside of the ribosome. Forms the main docking site for trigger factor binding to the ribosome. This Methylococcus capsulatus (strain ATCC 33009 / NCIMB 11132 / Bath) protein is Large ribosomal subunit protein uL23.